A 121-amino-acid polypeptide reads, in one-letter code: Histone H2B, sperm (121 aa).

A disordered region spans residues Met1 to Lys30. Pro2 carries the post-translational modification N,N-dimethylproline. Ser108 carries an O-linked (GlcNAc) serine glycan. A Glycyl lysine isopeptide (Lys-Gly) (interchain with G-Cter in ubiquitin) cross-link involves residue Lys116.

The protein belongs to the histone H2B family. As to quaternary structure, the nucleosome is a histone octamer containing two molecules each of H2A, H2B, H3 and H4 assembled in one H3-H4 heterotetramer and two H2A-H2B heterodimers. The octamer wraps approximately 147 bp of DNA. Monoubiquitination of Lys-116 gives a specific tag for epigenetic transcriptional activation and is also prerequisite for histone H3 'Lys-4' and 'Lys-79' methylation. Post-translationally, glcNAcylation at Ser-108 promotes monoubiquitination of Lys-116. It fluctuates in response to extracellular glucose, and associates with transcribed genes.

It localises to the nucleus. It is found in the chromosome. In terms of biological role, core component of nucleosome. Nucleosomes wrap and compact DNA into chromatin, limiting DNA accessibility to the cellular machineries which require DNA as a template. Histones thereby play a central role in transcription regulation, DNA repair, DNA replication and chromosomal stability. DNA accessibility is regulated via a complex set of post-translational modifications of histones, also called histone code, and nucleosome remodeling. This chain is Histone H2B, sperm, found in Marthasterias glacialis (Spiny starfish).